The following is a 347-amino-acid chain: Ferrochelatase (347 aa).

Positions 193 and 273 each coordinate Fe cation.

The protein belongs to the ferrochelatase family.

Its subcellular location is the cytoplasm. The catalysed reaction is heme b + 2 H(+) = protoporphyrin IX + Fe(2+). The protein operates within porphyrin-containing compound metabolism; protoheme biosynthesis; protoheme from protoporphyrin-IX: step 1/1. In terms of biological role, catalyzes the ferrous insertion into protoporphyrin IX. This Rickettsia canadensis (strain McKiel) protein is Ferrochelatase.